The sequence spans 227 residues: NAD(P)H-quinone oxidoreductase subunit K, chloroplastic (227 aa).

Residues Cys-43, Cys-44, Cys-108, and Cys-139 each coordinate [4Fe-4S] cluster.

This sequence belongs to the complex I 20 kDa subunit family. As to quaternary structure, NDH is composed of at least 16 different subunits, 5 of which are encoded in the nucleus. It depends on [4Fe-4S] cluster as a cofactor.

It localises to the plastid. The protein resides in the chloroplast thylakoid membrane. It catalyses the reaction a plastoquinone + NADH + (n+1) H(+)(in) = a plastoquinol + NAD(+) + n H(+)(out). It carries out the reaction a plastoquinone + NADPH + (n+1) H(+)(in) = a plastoquinol + NADP(+) + n H(+)(out). NDH shuttles electrons from NAD(P)H:plastoquinone, via FMN and iron-sulfur (Fe-S) centers, to quinones in the photosynthetic chain and possibly in a chloroplast respiratory chain. The immediate electron acceptor for the enzyme in this species is believed to be plastoquinone. Couples the redox reaction to proton translocation, and thus conserves the redox energy in a proton gradient. The polypeptide is NAD(P)H-quinone oxidoreductase subunit K, chloroplastic (Spinacia oleracea (Spinach)).